Here is a 125-residue protein sequence, read N- to C-terminus: MFGIGTDIIEIDRIRRAYHTYGDRFLNKIFTKGEQAYCFSKSDPYASLAVRFAAKEAVSKALGTGIGKSLKWKEIEISRGTQHPQVSVPESLLALLEVKRILLSMSHCREYATAVAIAEVTNSSK.

Residues D7 and E56 each coordinate Mg(2+).

This sequence belongs to the P-Pant transferase superfamily. AcpS family. It depends on Mg(2+) as a cofactor.

The protein resides in the cytoplasm. The enzyme catalyses apo-[ACP] + CoA = holo-[ACP] + adenosine 3',5'-bisphosphate + H(+). Transfers the 4'-phosphopantetheine moiety from coenzyme A to a Ser of acyl-carrier-protein. This is Holo-[acyl-carrier-protein] synthase from Chlamydia muridarum (strain MoPn / Nigg).